A 337-amino-acid chain; its full sequence is Inositol 2-dehydrogenase (337 aa).

Belongs to the Gfo/Idh/MocA family. As to quaternary structure, homotetramer.

It catalyses the reaction myo-inositol + NAD(+) = scyllo-inosose + NADH + H(+). Functionally, involved in the oxidation of myo-inositol (MI) to 2-keto-myo-inositol (2KMI or 2-inosose). This Gluconacetobacter diazotrophicus (strain ATCC 49037 / DSM 5601 / CCUG 37298 / CIP 103539 / LMG 7603 / PAl5) protein is Inositol 2-dehydrogenase.